A 140-amino-acid polypeptide reads, in one-letter code: Large ribosomal subunit protein uL16 (140 aa).

The segment covering 1–17 (MPLMPKRVKHRKMHRGS) has biased composition (basic residues). The segment at 1–21 (MPLMPKRVKHRKMHRGSRSGN) is disordered.

This sequence belongs to the universal ribosomal protein uL16 family. As to quaternary structure, part of the 50S ribosomal subunit.

In terms of biological role, binds 23S rRNA and is also seen to make contacts with the A and possibly P site tRNAs. The sequence is that of Large ribosomal subunit protein uL16 from Akkermansia muciniphila (strain ATCC BAA-835 / DSM 22959 / JCM 33894 / BCRC 81048 / CCUG 64013 / CIP 107961 / Muc).